The sequence spans 164 residues: MRCPKCNYNKSSVVDSRQAEDGNTIRRRRECESCHTRFTTFERLEELPLLVIKKDGTREQFSRDKILNGVVQSAQKRPVSSTDIENLISRIEQKVRTAYENEVSSTVIGNLVMEELAELDEITYVRFASVYKSFKDLDEIEELLQQITNRVRGKKKSSVDDEAY.

A zinc finger spans residues 3-34 (CPKCNYNKSSVVDSRQAEDGNTIRRRRECESC). Residues 49 to 139 (LLVIKKDGTR…VYKSFKDLDE (91 aa)) enclose the ATP-cone domain.

Belongs to the NrdR family. Zn(2+) is required as a cofactor.

Negatively regulates transcription of bacterial ribonucleotide reductase nrd genes and operons by binding to NrdR-boxes. The sequence is that of Transcriptional repressor NrdR from Streptococcus equi subsp. zooepidemicus (strain H70).